We begin with the raw amino-acid sequence, 231 residues long: TATA-box-binding protein (231 aa).

Repeat copies occupy residues 58-134 (LQNI…ARII) and 148-225 (IQNI…YPVL).

The protein belongs to the TBP family. Belongs to the TFIID complex together with the TBP-associated factors (TAFs). Binds DNA as monomer.

The protein resides in the nucleus. General transcription factor that functions at the core of the DNA-binding multiprotein factor TFIID. Binding of TFIID to the TATA box is the initial transcriptional step of the pre-initiation complex (PIC), playing a role in the activation of eukaryotic genes transcribed by RNA polymerase II. The protein is TATA-box-binding protein (tbp1) of Schizosaccharomyces pombe (strain 972 / ATCC 24843) (Fission yeast).